The following is a 138-amino-acid chain: MAEVQQLRVQEAVDAMVKSVERENIRKMQGLMFRCSANCCEDNQASMQQVHQCIERCHAPLAQAQALVTSELERFQDRLARCTMHCNDKAKDSMDAGSKELQVKRQLDSCVAKCVDDHMHLIPTMTKKIKESLSSIGK.

A2 is subject to N-acetylalanine. A phosphothreonine mark is found at T124 and T126.

This sequence belongs to the FAM136 family.

The chain is Protein FAM136A (Fam136a) from Rattus norvegicus (Rat).